We begin with the raw amino-acid sequence, 368 residues long: Divinyl chlorophyll a/b light-harvesting protein PcbA (368 aa).

6 helical membrane-spanning segments follow: residues 27 to 47 (FIASHIGHTGLICFGAGANTL), 63 to 83 (GFVVLPHLAGLGIGGIENGVI), 89 to 109 (MLVVAVFHLIFSAVYAGGAML), 203 to 223 (VMGGHAFLAFFLSAGAIWHIF), 243 to 263 (FVLSTSLAGAAFIAFVAAFWA), and 307 to 327 (LSNFHFYLGFFYLQGHFWHGL).

The protein belongs to the PsbB/PsbC family. IsiA/Pcb subfamily. In terms of assembly, the antenna complex consists of divinyl chlorophylls (a and b) and divinyl chlorophyll a/b binding proteins. Forms complexes with PSII, consisting of a PSII dimer and 4 or 8 PcbA subunits. These complexes are also found under conditions of iron-starvation. It depends on divinyl chlorophyll a as a cofactor. The cofactor is divinyl chlorophyll b.

It localises to the cellular thylakoid membrane. Its function is as follows. The antenna complex functions as a light receptor, it captures and delivers excitation energy to photosystems II. The Prochlorales pcb genes are not related to higher plant LHCs. The polypeptide is Divinyl chlorophyll a/b light-harvesting protein PcbA (pcbA) (Prochlorococcus marinus (strain MIT 9313)).